The primary structure comprises 515 residues: Galactose-1-phosphate uridylyltransferase (515 aa).

Belongs to the galactose-1-phosphate uridylyltransferase type 2 family.

Its subcellular location is the cytoplasm. It carries out the reaction alpha-D-galactose 1-phosphate + UDP-alpha-D-glucose = alpha-D-glucose 1-phosphate + UDP-alpha-D-galactose. It participates in carbohydrate metabolism; galactose metabolism. Its function is as follows. Transfers the UMP unit from UDP-glucose (UDP-Glc) to Gal1P. Can also transfer the UMP unit to GlcNAc1P and GalNAc1P. Involved in the general galactose metabolism, and also involved in the lacto-N-biose I/galacto-N-biose (LNB/GNB) degradation pathway, which is important for host intestinal colonization by bifidobacteria. The polypeptide is Galactose-1-phosphate uridylyltransferase (Bifidobacterium longum subsp. longum (strain ATCC 15707 / DSM 20219 / JCM 1217 / NCTC 11818 / E194b)).